The following is a 234-amino-acid chain: UPF0173 metal-dependent hydrolase Rleg2_1519 (234 aa).

The protein belongs to the UPF0173 family.

This is UPF0173 metal-dependent hydrolase Rleg2_1519 from Rhizobium leguminosarum bv. trifolii (strain WSM2304).